Reading from the N-terminus, the 160-residue chain is MTGAVCPGSFDPVTLGHVDVFERASAQFDEVVVAILTNPAKKGMFDLDERIAMIEESTTHLSNLRVEAGQGLVVDFVRSRGMTAIVKGLRTGTDFEYELQMAQMNKHIAGVDTFFVATAPRYSFVSSSLAKEVAMLGGDVSELLPEPVNRRLREKLSGRS.

Position 9 (S9) interacts with substrate. ATP-binding positions include 9–10 (SF) and H17. The substrate site is built by K41, V73, and K87. Residues 88 to 90 (GLR), E98, and 122 to 128 (YSFVSSS) contribute to the ATP site.

Belongs to the bacterial CoaD family. Homohexamer. Mg(2+) serves as cofactor.

Its subcellular location is the cytoplasm. The catalysed reaction is (R)-4'-phosphopantetheine + ATP + H(+) = 3'-dephospho-CoA + diphosphate. Its pathway is cofactor biosynthesis; coenzyme A biosynthesis; CoA from (R)-pantothenate: step 4/5. Its function is as follows. Reversibly transfers an adenylyl group from ATP to 4'-phosphopantetheine, yielding dephospho-CoA (dPCoA) and pyrophosphate. This is Phosphopantetheine adenylyltransferase from Mycobacterium avium (strain 104).